The sequence spans 470 residues: Argininosuccinate lyase (470 aa).

The protein belongs to the lyase 1 family. Argininosuccinate lyase subfamily.

It is found in the cytoplasm. The catalysed reaction is 2-(N(omega)-L-arginino)succinate = fumarate + L-arginine. It functions in the pathway amino-acid biosynthesis; L-arginine biosynthesis; L-arginine from L-ornithine and carbamoyl phosphate: step 3/3. The protein is Argininosuccinate lyase of Ehrlichia chaffeensis (strain ATCC CRL-10679 / Arkansas).